A 217-amino-acid chain; its full sequence is MITRAELLDMLASNAPQGFEAQALGLVPIVVETSGRGERSYDIYSRLLKERLVFMVGEVNDQTANLVVAQLLFLESENPDKDISLYINSPGGSVSAGMAIYDTMQFIKPDVSTLCMGLAASMGAFLLASGAKGKRFALPNSRVMIHQPLGGARGQASDIEIQAREILYLKERLNNLLAQHTGQDVERIARDTDRDNFMSSEDAKAYGLIDQVLLKRP.

Serine 121 serves as the catalytic Nucleophile. Histidine 146 is a catalytic residue.

The protein belongs to the peptidase S14 family. As to quaternary structure, fourteen ClpP subunits assemble into 2 heptameric rings which stack back to back to give a disk-like structure with a central cavity, resembling the structure of eukaryotic proteasomes.

It is found in the cytoplasm. It catalyses the reaction Hydrolysis of proteins to small peptides in the presence of ATP and magnesium. alpha-casein is the usual test substrate. In the absence of ATP, only oligopeptides shorter than five residues are hydrolyzed (such as succinyl-Leu-Tyr-|-NHMec, and Leu-Tyr-Leu-|-Tyr-Trp, in which cleavage of the -Tyr-|-Leu- and -Tyr-|-Trp bonds also occurs).. Its function is as follows. Cleaves peptides in various proteins in a process that requires ATP hydrolysis. Has a chymotrypsin-like activity. Plays a major role in the degradation of misfolded proteins. This chain is ATP-dependent Clp protease proteolytic subunit, found in Burkholderia cenocepacia (strain HI2424).